The primary structure comprises 223 residues: Probable transaldolase (223 aa).

Residue K92 is the Schiff-base intermediate with substrate of the active site.

It belongs to the transaldolase family. Type 3B subfamily.

Its subcellular location is the cytoplasm. The enzyme catalyses D-sedoheptulose 7-phosphate + D-glyceraldehyde 3-phosphate = D-erythrose 4-phosphate + beta-D-fructose 6-phosphate. The protein operates within carbohydrate degradation; pentose phosphate pathway; D-glyceraldehyde 3-phosphate and beta-D-fructose 6-phosphate from D-ribose 5-phosphate and D-xylulose 5-phosphate (non-oxidative stage): step 2/3. In terms of biological role, transaldolase is important for the balance of metabolites in the pentose-phosphate pathway. This is Probable transaldolase from Thermus thermophilus (strain ATCC 27634 / DSM 579 / HB8).